The primary structure comprises 160 residues: MTTENNKPPVKTANQRGAARLAAVQALYQMDIGGTGVLEVVAEYETHRLGQEIDGETYLKADASWFRSIVAGVVRDQTKIDPLIRQALQDDWSLARVDSTVRAILRAGTFELLERKDVPIAVIVTEYVEIAHAFFQEDEPKLVNAVLDRIAKQVRVPAVK.

This sequence belongs to the NusB family.

Involved in transcription antitermination. Required for transcription of ribosomal RNA (rRNA) genes. Binds specifically to the boxA antiterminator sequence of the ribosomal RNA (rrn) operons. The protein is Transcription antitermination protein NusB of Allorhizobium ampelinum (strain ATCC BAA-846 / DSM 112012 / S4) (Agrobacterium vitis (strain S4)).